Reading from the N-terminus, the 323-residue chain is Cytosolic sulfotransferase 5 (323 aa).

A 3'-phosphoadenylyl sulfate-binding site is contributed by Lys-69–Trp-74. Catalysis depends on His-135, which acts as the Proton acceptor. 3'-phosphoadenylyl sulfate is bound by residues Arg-157, Ser-165, and Arg-289 to Gly-291.

Belongs to the sulfotransferase 1 family. Expressed in inflorescence stems, roots and siliques.

It is found in the cytoplasm. In terms of biological role, sulfotransferase that utilizes 3'-phospho-5'-adenylyl sulfate (PAPS) as sulfonate donor to specifically catalyze the sulfate conjugation of flavones and flavonols. Strictly specific for the position 7. Substrate preference is kaempferol 3-sulfate &gt; isorhamnetin &gt; kaempferol. This is Cytosolic sulfotransferase 5 (SOT5) from Arabidopsis thaliana (Mouse-ear cress).